The primary structure comprises 319 residues: Exopolyphosphatase 2 (319 aa).

This sequence belongs to the GppA/Ppx family. Homodimer.

It catalyses the reaction [phosphate](n) + H2O = [phosphate](n-1) + phosphate + H(+). With respect to regulation, exopolyphosphatase activity is inhibited by ppGpp alarmones produced during the bacterial stringent response. Its function is as follows. Degradation of inorganic polyphosphates (polyP). Releases orthophosphate processively from the ends of the polyP chain. Prefers long-chain length polyphosphates as substrates. The protein is Exopolyphosphatase 2 of Mycobacterium tuberculosis (strain CDC 1551 / Oshkosh).